Here is a 668-residue protein sequence, read N- to C-terminus: DNA mismatch repair protein MutL (668 aa).

The segment at 437–459 (TYQSQYSETGSHSQETLPLSEQK) is disordered. Residues 438-459 (YQSQYSETGSHSQETLPLSEQK) are compositionally biased toward polar residues.

Belongs to the DNA mismatch repair MutL/HexB family.

In terms of biological role, this protein is involved in the repair of mismatches in DNA. It is required for dam-dependent methyl-directed DNA mismatch repair. May act as a 'molecular matchmaker', a protein that promotes the formation of a stable complex between two or more DNA-binding proteins in an ATP-dependent manner without itself being part of a final effector complex. In Leuconostoc citreum (strain KM20), this protein is DNA mismatch repair protein MutL.